The chain runs to 328 residues: Lipoyl synthase (328 aa).

7 residues coordinate [4Fe-4S] cluster: C57, C62, C68, C83, C87, C90, and S298. The Radical SAM core domain occupies 69–287; sequence WSRGTATFML…REEGLSLGFL (219 aa).

It belongs to the radical SAM superfamily. Lipoyl synthase family. The cofactor is [4Fe-4S] cluster.

The protein resides in the cytoplasm. It carries out the reaction [[Fe-S] cluster scaffold protein carrying a second [4Fe-4S](2+) cluster] + N(6)-octanoyl-L-lysyl-[protein] + 2 oxidized [2Fe-2S]-[ferredoxin] + 2 S-adenosyl-L-methionine + 4 H(+) = [[Fe-S] cluster scaffold protein] + N(6)-[(R)-dihydrolipoyl]-L-lysyl-[protein] + 4 Fe(3+) + 2 hydrogen sulfide + 2 5'-deoxyadenosine + 2 L-methionine + 2 reduced [2Fe-2S]-[ferredoxin]. The protein operates within protein modification; protein lipoylation via endogenous pathway; protein N(6)-(lipoyl)lysine from octanoyl-[acyl-carrier-protein]: step 2/2. Its function is as follows. Catalyzes the radical-mediated insertion of two sulfur atoms into the C-6 and C-8 positions of the octanoyl moiety bound to the lipoyl domains of lipoate-dependent enzymes, thereby converting the octanoylated domains into lipoylated derivatives. In Deinococcus geothermalis (strain DSM 11300 / CIP 105573 / AG-3a), this protein is Lipoyl synthase.